A 224-amino-acid chain; its full sequence is Metalloproteinase inhibitor 4 (224 aa).

The first 29 residues, 1–29 (MPGSPRPAPSWVLLLRLLALLRPPGLGEA), serve as a signal peptide directing secretion. A Zn(2+)-binding site is contributed by Cys30. Involved in metalloproteinase-binding regions lie at residues 30–33 (CSCA) and 99–100 (SS). Cystine bridges form between Cys30/Cys102, Cys32/Cys131, Cys42/Cys156, Cys158/Cys205, Cys163/Cys168, and Cys176/Cys197. Residues 30–156 (CSCAPAHPQQ…SLNHHYHLNC (127 aa)) enclose the NTR domain.

The protein belongs to the protease inhibitor I35 (TIMP) family. In terms of tissue distribution, abundant in heart and present at low levels in many other tissues.

It is found in the secreted. Functionally, complexes with metalloproteinases (such as collagenases) and irreversibly inactivates them by binding to their catalytic zinc cofactor. Known to act on MMP-1, MMP-2, MMP-3, MMP-7 and MMP-9. This is Metalloproteinase inhibitor 4 (TIMP4) from Homo sapiens (Human).